Reading from the N-terminus, the 428-residue chain is 5'-nucleotidase domain-containing protein 4 (428 aa).

Catalysis depends on Asp-22, which acts as the Nucleophile. Positions 22, 24, and 317 each coordinate Mg(2+). The active-site Proton donor is the Asp-24.

Belongs to the 5'(3')-deoxyribonucleotidase family.

In Homo sapiens (Human), this protein is 5'-nucleotidase domain-containing protein 4 (NT5DC4).